The following is a 363-amino-acid chain: MIIYTTEVEDINSFYTLESLKEVYGIIWMLVPILTLVLGITIGVLVIVWLEREISAGIQQRIGPEYAGPLGLLQALADGTKLLFKENILPSRGNTRLFSIGPAIAVISILLSFSVIPFSSRLILADLNIGIFLWIAISSIAPVGLLMSGYGSNNKYSFLGGLRAAAQSISYEIPLTLCVLSISLLSNSSSTIDIVEAQSKYGYWGWNLWRQPIGFIVFLISSLAECERLPFDLPEAEEELVAGYQTEYSGIKFGLFYVASYLNLLLSSLFVTVLYLGGWNISIPYVFAPELFEINKINGIIGTTIGIFITLAKTYLFLFISIATRWTLPRLRMDQLLNLGWKFLLPISLGNLLLTTSFQLLSL.

6 consecutive transmembrane segments (helical) span residues 30–50 (LVPI…IVWL), 98–118 (FSIG…VIPF), 129–149 (IGIF…LMSG), 248–268 (YSGI…LLSS), 300–320 (IIGT…FLFI), and 343–363 (FLLP…LLSL).

It belongs to the complex I subunit 1 family. As to quaternary structure, NDH is composed of at least 16 different subunits, 5 of which are encoded in the nucleus.

It is found in the plastid. The protein resides in the chloroplast thylakoid membrane. The catalysed reaction is a plastoquinone + NADH + (n+1) H(+)(in) = a plastoquinol + NAD(+) + n H(+)(out). It carries out the reaction a plastoquinone + NADPH + (n+1) H(+)(in) = a plastoquinol + NADP(+) + n H(+)(out). In terms of biological role, NDH shuttles electrons from NAD(P)H:plastoquinone, via FMN and iron-sulfur (Fe-S) centers, to quinones in the photosynthetic chain and possibly in a chloroplast respiratory chain. The immediate electron acceptor for the enzyme in this species is believed to be plastoquinone. Couples the redox reaction to proton translocation, and thus conserves the redox energy in a proton gradient. The chain is NAD(P)H-quinone oxidoreductase subunit 1, chloroplastic from Gossypium barbadense (Sea Island cotton).